The following is a 164-amino-acid chain: Thiol peroxidase (164 aa).

The 146-residue stretch at 18–163 (INEGDFAPDF…FDAALAAYKN (146 aa)) folds into the Thioredoxin domain. The active-site Cysteine sulfenic acid (-SOH) intermediate is the Cys60. Cys60 and Cys93 are disulfide-bonded.

This sequence belongs to the peroxiredoxin family. Tpx subfamily. In terms of assembly, homodimer.

It carries out the reaction a hydroperoxide + [thioredoxin]-dithiol = an alcohol + [thioredoxin]-disulfide + H2O. In terms of biological role, thiol-specific peroxidase that catalyzes the reduction of hydrogen peroxide and organic hydroperoxides to water and alcohols, respectively. Plays a role in cell protection against oxidative stress by detoxifying peroxides. The chain is Thiol peroxidase from Staphylococcus aureus (strain Mu50 / ATCC 700699).